A 124-amino-acid polypeptide reads, in one-letter code: Keratin-associated protein 12-2 (124 aa).

Tandem repeats lie at residues 10–13 (CQAA), 14–18 (CVPSS), 19–23 (CQPSC), 24–28 (STSSP), 33–38 (CFTSSL), 39–43 (CQPTC), 44–48 (STSST), 49–52 (CQAT), 53–57 (CVPVS), 58–62 (YRPAV), 63–67 (CLPVT), 68–72 (YKPTL), 73–77 (CVTPS), 78–82 (CQSSV), 83–87 (FLPVS), 88–92 (YRPAV), 98–102 (CQSSG), 103–107 (CYQPS), 108–112 (CPTLV), and 113–117 (YRPIS). The 20 X 5 AA approximate repeats stretch occupies residues 10 to 117 (CQAACVPSSC…CPTLVYRPIS (108 aa)).

The protein belongs to the KRTAP type 12 family. Interacts with hair keratins.

Functionally, in the hair cortex, hair keratin intermediate filaments are embedded in an interfilamentous matrix, consisting of hair keratin-associated proteins (KRTAP), which are essential for the formation of a rigid and resistant hair shaft through their extensive disulfide bond cross-linking with abundant cysteine residues of hair keratins. The matrix proteins include the high-sulfur and high-glycine-tyrosine keratins. The chain is Keratin-associated protein 12-2 from Bos taurus (Bovine).